Here is a 251-residue protein sequence, read N- to C-terminus: Triosephosphate isomerase (251 aa).

Substrate is bound at residue 9–11 (NWK). H95 serves as the catalytic Electrophile. The active-site Proton acceptor is E167. Substrate contacts are provided by residues G173, S212, and 233–234 (GG).

This sequence belongs to the triosephosphate isomerase family. Homodimer.

The protein localises to the cytoplasm. The catalysed reaction is D-glyceraldehyde 3-phosphate = dihydroxyacetone phosphate. It participates in carbohydrate biosynthesis; gluconeogenesis. The protein operates within carbohydrate degradation; glycolysis; D-glyceraldehyde 3-phosphate from glycerone phosphate: step 1/1. Its function is as follows. Involved in the gluconeogenesis. Catalyzes stereospecifically the conversion of dihydroxyacetone phosphate (DHAP) to D-glyceraldehyde-3-phosphate (G3P). This is Triosephosphate isomerase from Pseudomonas fluorescens (strain Pf0-1).